Reading from the N-terminus, the 388-residue chain is Succinate--CoA ligase [ADP-forming] subunit beta (388 aa).

The 237-residue stretch at 9–245 (KELLKSYGLP…KSQENERELK (237 aa)) folds into the ATP-grasp domain. Residues K46, 53–55 (GRG), E100, Y103, and E108 contribute to the ATP site. Positions 200 and 214 each coordinate Mg(2+). Substrate-binding positions include N265 and 322–324 (GIV).

It belongs to the succinate/malate CoA ligase beta subunit family. In terms of assembly, heterotetramer of two alpha and two beta subunits. The cofactor is Mg(2+).

The enzyme catalyses succinate + ATP + CoA = succinyl-CoA + ADP + phosphate. The catalysed reaction is GTP + succinate + CoA = succinyl-CoA + GDP + phosphate. The protein operates within carbohydrate metabolism; tricarboxylic acid cycle; succinate from succinyl-CoA (ligase route): step 1/1. Its function is as follows. Succinyl-CoA synthetase functions in the citric acid cycle (TCA), coupling the hydrolysis of succinyl-CoA to the synthesis of either ATP or GTP and thus represents the only step of substrate-level phosphorylation in the TCA. The beta subunit provides nucleotide specificity of the enzyme and binds the substrate succinate, while the binding sites for coenzyme A and phosphate are found in the alpha subunit. The protein is Succinate--CoA ligase [ADP-forming] subunit beta of Psychrobacter arcticus (strain DSM 17307 / VKM B-2377 / 273-4).